A 251-amino-acid chain; its full sequence is Isoprenyl transferase (251 aa).

D31 is a catalytic residue. D31 is a Mg(2+) binding site. Residues 32 to 35, W36, R44, H48, and 76 to 78 contribute to the substrate site; these read GNGR and STE. The active-site Proton acceptor is N79. Residues W80, R82, R199, and 205 to 207 each bind substrate; that span reads RIS. E218 is a Mg(2+) binding site.

This sequence belongs to the UPP synthase family. As to quaternary structure, homodimer. Requires Mg(2+) as cofactor.

In terms of biological role, catalyzes the condensation of isopentenyl diphosphate (IPP) with allylic pyrophosphates generating different type of terpenoids. The protein is Isoprenyl transferase of Thermosynechococcus vestitus (strain NIES-2133 / IAM M-273 / BP-1).